Consider the following 497-residue polypeptide: Serine/threonine protein phosphatase 2A 57 kDa regulatory subunit B' epsilon isoform (497 aa).

Positions 12–71 (KFNKSDQHHQDNNNNNNNTSTNTVVRGSRTTTPAPSSVSNGESQTTAQSPSQTPNHPMFT) are disordered. Residues 23–34 (NNNNNNNTSTNT) are compositionally biased toward low complexity. Over residues 35–71 (VVRGSRTTTPAPSSVSNGESQTTAQSPSQTPNHPMFT) the composition is skewed to polar residues.

This sequence belongs to the phosphatase 2A regulatory subunit B56 family. As to quaternary structure, PP2A consists of a common heteromeric enzyme, composed of a catalytic subunit (subunits C), a constant regulatory subunit (subunit A), and a variety of regulatory subunits such as subunits B (the R2/B/PR55/B55, R3/B''/PR72/PR130/PR59 and R5/B'/B56 families). Expressed ubiquitously.

Its subcellular location is the cytoplasm. Functionally, the B regulatory subunit may modulate substrate selectivity and catalytic activity, and may also direct the localization of the catalytic enzyme to a particular subcellular compartment. This chain is Serine/threonine protein phosphatase 2A 57 kDa regulatory subunit B' epsilon isoform (B'EPSILON), found in Arabidopsis thaliana (Mouse-ear cress).